The primary structure comprises 71 residues: Large ribosomal subunit protein bL31 (71 aa).

4 residues coordinate Zn(2+): Cys16, Cys18, Cys37, and Cys40.

This sequence belongs to the bacterial ribosomal protein bL31 family. Type A subfamily. Part of the 50S ribosomal subunit. It depends on Zn(2+) as a cofactor.

Binds the 23S rRNA. The polypeptide is Large ribosomal subunit protein bL31 (Pseudomonas aeruginosa (strain LESB58)).